Here is a 719-residue protein sequence, read N- to C-terminus: B3 domain-containing protein Os03g0120900 (719 aa).

Positions His-7 to Asn-110 form a DNA-binding region, TF-B3. Disordered regions lie at residues Arg-328 to Gln-381 and Glu-412 to Val-443. Residues Asp-351 to Pro-366 show a composition bias toward basic and acidic residues. Residues His-416–Asn-430 are compositionally biased toward polar residues.

The protein resides in the nucleus. The protein is B3 domain-containing protein Os03g0120900 of Oryza sativa subsp. japonica (Rice).